A 473-amino-acid polypeptide reads, in one-letter code: MLFSFFLLLTCTQLCLGTNRPDYNDDEEDDYKPPVYKPSPSKYRPVNPCLKKPCKYNGVCKPRGGSYKCFCKGGYYGYNCNLKNACKPNQCKNKSRCVPVGKTFKCVCRNGNFGRLCEKNVCSPNPCKNNGKCSPLGKTGYKCTCSGGYTGPRCEVHACKPNPCKNKGRCFPDGKTGYKCRCVDGYSGPTCQENACKPNPCSNGGTCSADKFGDYSCECRPGYFGPECERYVCAPNPCKNGGICSSDGSGGYRCRCKGGYSGPTCKVNVCKPTPCKNSGRCVNKGSSYNCICKGGYSGPTCGENVCKPNPCQNRGRCYPDNSDDGFKCRCVGGYKGPTCEDKPNPCNTKPCKNGGKCNYNGKIYTCKCAYGWRGRHCTDKAYKPNPCVVSKPCKNRGKCIWNGKAYRCKCAYGYGGRHCTKKSYKKNPCASRPCKNRGKCTDKGNGYVCKCARGYSGRYCSLKSPPSYDDDEY.

An N-terminal signal peptide occupies residues 1 to 17; the sequence is MLFSFFLLLTCTQLCLG. 3',4'-dihydroxyphenylalanine is present on residues Tyr-23, Tyr-31, Tyr-36, and Tyr-43. EGF-like domains are found at residues 45–81, 82–117, 118–154, 155–191, 192–228, 229–265, 266–301, 302–340, 342–378, 383–420, and 425–461; these read PVNPCLKKPCKYNGVCKPRGGSYKCFCKGGYYGYNCN, LKNACKPNQCKNKSRCVPVGKTFKCVCRNGNFGRLC, EKNVCSPNPCKNNGKCSPLGKTGYKCTCSGGYTGPRC, EVHACKPNPCKNKGRCFPDGKTGYKCRCVDGYSGPTC, QENACKPNPCSNGGTCSADKFGDYSCECRPGYFGPEC, ERYVCAPNPCKNGGICSSDGSGGYRCRCKGGYSGPTC, KVNVCKPTPCKNSGRCVNKGSSYNCICKGGYSGPTC, GENVCKPNPCQNRGRCYPDNSDDGFKCRCVGGYKGPTCE, KPNPCNTKPCKNGGKCNYNGKIYTCKCAYGWRGRHCT, KPNPCVVSKPCKNRGKCIWNGKAYRCKCAYGYGGRHCT, and KKNPCASRPCKNRGKCTDKGNGYVCKCARGYSGRYCS. Cystine bridges form between Cys-49–Cys-60, Cys-54–Cys-69, Cys-71–Cys-80, Cys-86–Cys-97, Cys-91–Cys-106, Cys-108–Cys-117, Cys-122–Cys-133, Cys-127–Cys-143, Cys-145–Cys-154, Cys-159–Cys-170, Cys-164–Cys-180, Cys-182–Cys-191, Cys-196–Cys-207, Cys-201–Cys-217, Cys-219–Cys-228, Cys-233–Cys-244, Cys-238–Cys-254, Cys-256–Cys-265, Cys-270–Cys-281, Cys-275–Cys-290, Cys-292–Cys-301, Cys-306–Cys-317, Cys-311–Cys-328, Cys-330–Cys-339, Cys-346–Cys-357, Cys-351–Cys-366, Cys-368–Cys-377, Cys-387–Cys-399, Cys-393–Cys-408, Cys-410–Cys-419, Cys-429–Cys-440, Cys-434–Cys-449, and Cys-451–Cys-460. Asn-93 carries N-linked (GlcNAc...) asparagine glycosylation.

In terms of processing, contains L-DOPA (3',4'-dihydroxyphenylalanine). Produced by the byssal gland.

The protein localises to the secreted. Functionally, provides adhesiveness to the mussel's foot. Mussels produce one of the strongest water insoluble glues. The mussel's adhesive is a bundle of threads, called a byssus, formed by a fibrous collagenous core coated with adhesive proteins. The chain is Adhesive plaque matrix protein 2 (FP2) from Mytilus galloprovincialis (Mediterranean mussel).